Here is a 543-residue protein sequence, read N- to C-terminus: Germacrene A synthase (543 aa).

4 residues coordinate Mg(2+): Asp296, Asp300, Asp439, and Glu447. Positions 296–300 (DDTYD) match the DDXXD motif motif.

It belongs to the terpene synthase family. Tpsa subfamily. Requires Mg(2+) as cofactor. The cofactor is Mn(2+). As to expression, barely detectable in leaves.

The protein resides in the plastid. Its subcellular location is the chloroplast. The catalysed reaction is (2E,6E)-farnesyl diphosphate = germacrene A + diphosphate. The enzyme catalyses (2E,6E)-farnesyl diphosphate = (1S,2S,4R)-beta-elemene + diphosphate. It functions in the pathway secondary metabolite biosynthesis; terpenoid biosynthesis. Sesquiterpene synthase involved in the biosynthesis of volatile compounds widely used in aromatherapy and folk medicine, and present in culinary herbs. Mediates the conversion of (2E,6E)-farnesyl diphosphate (FPP) into germacrene A and beta-elemene. Not able to use (2E)-geranyl diphosphate (GPP) as substrate. This Lavandula viridis (Green lavender) protein is Germacrene A synthase.